Reading from the N-terminus, the 152-residue chain is Transcriptional regulator MraZ (152 aa).

SpoVT-AbrB domains follow at residues 5-52 (ATLV…PLPE) and 81-124 (ASEC…DETT).

The protein belongs to the MraZ family. As to quaternary structure, forms oligomers.

It localises to the cytoplasm. The protein resides in the nucleoid. Functionally, negatively regulates its own expression and that of the subsequent genes in the proximal part of the division and cell wall (dcw) gene cluster. Acts by binding directly to DNA. May also regulate the expression of genes outside the dcw cluster. The chain is Transcriptional regulator MraZ from Escherichia coli O127:H6 (strain E2348/69 / EPEC).